The chain runs to 971 residues: Kinesin-like protein KIN-6 (971 aa).

Disordered stretches follow at residues Met-1–Ala-44 and Thr-93–Glu-121. Over residues Ala-29–Pro-39 the composition is skewed to low complexity. In terms of domain architecture, Kinesin motor spans Ser-76–Ile-460. Residue Gly-202–Thr-209 coordinates ATP. The span at Arg-700–Ser-709 shows a compositional bias: basic and acidic residues. Disordered regions lie at residues Arg-700–Met-856 and Lys-872–Pro-917. Over residues Gln-768 to Thr-783 the composition is skewed to polar residues. Residues Val-785–Asn-797 are compositionally biased toward basic and acidic residues. Over residues Glu-809–Ala-827 the composition is skewed to polar residues. The span at Arg-831 to Arg-842 shows a compositional bias: basic and acidic residues. Residues Lys-903–Leu-915 are compositionally biased toward basic residues.

Belongs to the TRAFAC class myosin-kinesin ATPase superfamily. Kinesin family. KIN-6 subfamily.

The polypeptide is Kinesin-like protein KIN-6 (Arabidopsis thaliana (Mouse-ear cress)).